The sequence spans 348 residues: Dihydroorotase (348 aa).

Positions 17 and 19 each coordinate Zn(2+). Residues 19-21 (HLR) and asparagine 45 contribute to the substrate site. 3 residues coordinate Zn(2+): lysine 103, histidine 140, and histidine 178. Lysine 103 carries the post-translational modification N6-carboxylysine. Histidine 140 contributes to the substrate binding site. Substrate is bound at residue leucine 223. Zn(2+) is bound at residue aspartate 251. Aspartate 251 is an active-site residue. Substrate contacts are provided by histidine 255 and alanine 267.

The protein belongs to the metallo-dependent hydrolases superfamily. DHOase family. Class II DHOase subfamily. In terms of assembly, homodimer. It depends on Zn(2+) as a cofactor.

The catalysed reaction is (S)-dihydroorotate + H2O = N-carbamoyl-L-aspartate + H(+). It participates in pyrimidine metabolism; UMP biosynthesis via de novo pathway; (S)-dihydroorotate from bicarbonate: step 3/3. Functionally, catalyzes the reversible cyclization of carbamoyl aspartate to dihydroorotate. In Escherichia coli O7:K1 (strain IAI39 / ExPEC), this protein is Dihydroorotase.